The sequence spans 383 residues: BRISC and BRCA1-A complex member 2 (383 aa).

Position 1 is an N-acetylmethionine (M1). S2 is modified (phosphoserine). UEV-like regions lie at residues 30–147 (DATN…TLLE) and 275–364 (IAAF…RAKA).

It belongs to the BABAM2 family. As to quaternary structure, component of the ARISC complex, at least composed of UIMC1/RAP80, ABRAXAS1, BRCC3/BRCC36, BABAM2 and BABAM1/NBA1. Component of the BRCA1-A complex, at least composed of BRCA1, BARD1, UIMC1/RAP80, ABRAXAS1, BRCC3/BRCC36, BABAM2 and BABAM1/NBA1. In the BRCA1-A complex, interacts directly with ABRAXAS1, BRCC3/BRCC36 and BABAM1/NBA1. Binds polyubiquitin. Component of the BRISC complex, at least composed of ABRAXAS2, BRCC3/BRCC36, BABAM2 and BABAM1/NBA1. Identified in a complex with SHMT2 and the other subunits of the BRISC complex. Component of the BRCA1/BRCA2 containing complex (BRCC), which also contains BRCA1, BRCA2, BARD1, BRCC3/BRCC36 and RAD51. BRCC is a ubiquitin E3 ligase complex that enhances cellular survival following DNA damage. May interact with FAS and TNFRSF1A.

The protein resides in the cytoplasm. It is found in the nucleus. Component of the BRCA1-A complex, a complex that specifically recognizes 'Lys-63'-linked ubiquitinated histones H2A and H2AX at DNA lesions sites, leading to target the BRCA1-BARD1 heterodimer to sites of DNA damage at double-strand breaks (DSBs). The BRCA1-A complex also possesses deubiquitinase activity that specifically removes 'Lys-63'-linked ubiquitin on histones H2A and H2AX. In the BRCA1-A complex, it acts as an adapter that bridges the interaction between BABAM1/NBA1 and the rest of the complex, thereby being required for the complex integrity and modulating the E3 ubiquitin ligase activity of the BRCA1-BARD1 heterodimer. Component of the BRISC complex, a multiprotein complex that specifically cleaves 'Lys-63'-linked ubiquitin in various substrates. Within the BRISC complex, acts as an adapter that bridges the interaction between BABAM1/NBA1 and the rest of the complex, thereby being required for the complex integrity. The BRISC complex is required for normal mitotic spindle assembly and microtubule attachment to kinetochores via its role in deubiquitinating NUMA1. The BRISC complex plays a role in interferon signaling via its role in the deubiquitination of the interferon receptor IFNAR1; deubiquitination increases IFNAR1 activity by enhancing its stability and cell surface expression. Down-regulates the response to bacterial lipopolysaccharide (LPS) via its role in IFNAR1 deubiquitination. May play a role in homeostasis or cellular differentiation in cells of neural, epithelial and germline origins. May also act as a death receptor-associated anti-apoptotic protein, which inhibits the mitochondrial apoptotic pathway. May regulate TNF-alpha signaling through its interactions with TNFRSF1A; however these effects may be indirect. The polypeptide is BRISC and BRCA1-A complex member 2 (Rattus norvegicus (Rat)).